A 974-amino-acid chain; its full sequence is Probable proton ATPase 1B (974 aa).

The segment covering 1–23 (MSSKKYELDAAAFEDKPESHSDA) has biased composition (basic and acidic residues). The segment at 1 to 61 (MSSKKYELDA…ATDLLPPSKG (61 aa)) is disordered. 4 helical membrane passes run 93-112 (GLWG…EFAL), 118-137 (GAIL…YETI), 265-286 (VMLA…YLLA), and 295-321 (ALQF…TLAV). Aspartate 351 functions as the 4-aspartylphosphate intermediate in the catalytic mechanism. Helical transmembrane passes span 631-651 (AAAD…AMLV), 662-684 (FLTY…CFSL), 698-712 (FFHL…ITLL), 738-761 (VVFV…LWIG), 813-840 (FFFY…AASF), and 869-887 (VWIY…KVLA). A disordered region spans residues 952–974 (REDTHVLNESTSPVNAFSPKVKK).

Belongs to the cation transport ATPase (P-type) (TC 3.A.3) family. Type IIIA subfamily.

The protein resides in the membrane. The catalysed reaction is ATP + H2O + H(+)(in) = ADP + phosphate + 2 H(+)(out). This is Probable proton ATPase 1B (H1B) from Leishmania donovani.